A 305-amino-acid polypeptide reads, in one-letter code: NAD kinase (305 aa).

Asp88 functions as the Proton acceptor in the catalytic mechanism. Residues 88–89, Arg93, 162–163, Lys173, Asn192, 203–208, and Gln262 each bind NAD(+); these read DG, NE, and TAYSFS.

It belongs to the NAD kinase family. It depends on a divalent metal cation as a cofactor.

The protein resides in the cytoplasm. The enzyme catalyses NAD(+) + ATP = ADP + NADP(+) + H(+). Functionally, involved in the regulation of the intracellular balance of NAD and NADP, and is a key enzyme in the biosynthesis of NADP. Catalyzes specifically the phosphorylation on 2'-hydroxyl of the adenosine moiety of NAD to yield NADP. This chain is NAD kinase, found in Tropheryma whipplei (strain TW08/27) (Whipple's bacillus).